The following is a 602-amino-acid chain: mRNA-capping enzyme subunit beta (602 aa).

The segment at 1 to 249 (MSEHHSKRAL…NESNSEETHD (249 aa)) is disordered. The span at 15-42 (LVNHDENDKSKLQKLADNESSVRSDDNR) shows a compositional bias: basic and acidic residues. Positions 48–64 (NIVNGNNSNSDLNSNGV) are enriched in low complexity. Over residues 65–76 (IEEDTDTDDDVG) the composition is skewed to acidic residues. Basic and acidic residues predominate over residues 88–110 (DYDKQDRFSPEKKRIQARKKDTS). Residues 114-128 (PSISNESPSNSKESS) show a composition bias toward low complexity. Over residues 141 to 169 (TDRKDSSEEKPDLTGPELVKEPDTNEYKR) the composition is skewed to basic and acidic residues. The span at 171–181 (SIQSITNAEDT) shows a compositional bias: polar residues. Composition is skewed to basic and acidic residues over residues 213–222 (TEEHKPKTET) and 231–249 (QENKQKDNVNESNSEETHD). The active-site N6-GMP-lysine intermediate is Lys276.

It belongs to the fungal TPase family. Heterodimer. The mRNA-capping enzyme is composed of two separate chains alpha and beta, respectively a mRNA guanylyltransferase and an mRNA 5'-triphosphate monophosphatase. Mg(2+) is required as a cofactor.

It is found in the nucleus. The enzyme catalyses a 5'-end triphospho-ribonucleoside in mRNA + H2O = a 5'-end diphospho-ribonucleoside in mRNA + phosphate + H(+). In terms of biological role, first step of mRNA capping. Converts the 5'-triphosphate end of a nascent mRNA chain into a diphosphate end. In Candida glabrata (strain ATCC 2001 / BCRC 20586 / JCM 3761 / NBRC 0622 / NRRL Y-65 / CBS 138) (Yeast), this protein is mRNA-capping enzyme subunit beta (CET1).